The chain runs to 76 residues: Exodeoxyribonuclease 7 small subunit (76 aa).

This sequence belongs to the XseB family. As to quaternary structure, heterooligomer composed of large and small subunits.

The protein localises to the cytoplasm. The enzyme catalyses Exonucleolytic cleavage in either 5'- to 3'- or 3'- to 5'-direction to yield nucleoside 5'-phosphates.. Its function is as follows. Bidirectionally degrades single-stranded DNA into large acid-insoluble oligonucleotides, which are then degraded further into small acid-soluble oligonucleotides. The sequence is that of Exodeoxyribonuclease 7 small subunit from Staphylococcus aureus (strain Mu3 / ATCC 700698).